The sequence spans 659 residues: tRNA 5-methylaminomethyl-2-thiouridine biosynthesis bifunctional protein MnmC (659 aa).

The tract at residues methionine 1–leucine 236 is tRNA (mnm(5)s(2)U34)-methyltransferase. The FAD-dependent cmnm(5)s(2)U34 oxidoreductase stretch occupies residues isoleucine 267–lysine 659.

The protein in the N-terminal section; belongs to the methyltransferase superfamily. tRNA (mnm(5)s(2)U34)-methyltransferase family. In the C-terminal section; belongs to the DAO family. FAD serves as cofactor.

The protein localises to the cytoplasm. The catalysed reaction is 5-aminomethyl-2-thiouridine(34) in tRNA + S-adenosyl-L-methionine = 5-methylaminomethyl-2-thiouridine(34) in tRNA + S-adenosyl-L-homocysteine + H(+). Catalyzes the last two steps in the biosynthesis of 5-methylaminomethyl-2-thiouridine (mnm(5)s(2)U) at the wobble position (U34) in tRNA. Catalyzes the FAD-dependent demodification of cmnm(5)s(2)U34 to nm(5)s(2)U34, followed by the transfer of a methyl group from S-adenosyl-L-methionine to nm(5)s(2)U34, to form mnm(5)s(2)U34. This is tRNA 5-methylaminomethyl-2-thiouridine biosynthesis bifunctional protein MnmC from Pseudomonas fluorescens (strain Pf0-1).